The chain runs to 764 residues: Mitogen-activated protein kinase kinase kinase 1b (764 aa).

Disordered stretches follow at residues 1–81, 120–260, 325–348, and 360–392; these read MVEE…IQQQ, KSIA…TATR, PNLA…SSAM, and VPEL…HYGS. Positions 14–30 are enriched in gly residues; the sequence is GSWGSGEDGGSSHGGKG. Composition is skewed to low complexity over residues 60–76 and 125–135; these read VHST…LSKS and SQPLSSPSLSQ. The segment covering 136 to 145 has biased composition (basic and acidic residues); it reads EHGEASHSND. The span at 184–201 shows a compositional bias: polar residues; sequence YVNSQPQNHYGRKNSPSQ. The region spanning 431–684 is the Protein kinase domain; sequence WFKGDFIGSG…CDMLLTHPFI (254 aa). Residues 437 to 445 and Lys459 contribute to the ATP site; that span reads IGSGTFGSV. The active-site Proton acceptor is Asp554. The tract at residues 706 to 764 is disordered; sequence EERSIDVSESPSIATSSQSGSSPSVAGDAVSPASVAVRPRSMRTLRSEFSMSSPESIAS. Residues 715-729 are compositionally biased toward low complexity; that stretch reads SPSIATSSQSGSSPS. Positions 752–764 are enriched in polar residues; it reads SEFSMSSPESIAS.

It belongs to the protein kinase superfamily. STE Ser/Thr protein kinase family. MAP kinase kinase kinase subfamily.

The protein localises to the cell membrane. It carries out the reaction L-seryl-[protein] + ATP = O-phospho-L-seryl-[protein] + ADP + H(+). It catalyses the reaction L-threonyl-[protein] + ATP = O-phospho-L-threonyl-[protein] + ADP + H(+). Functionally, the CERK1, MEKK1a/b, MKK1a/b/c and MPK4a/b proteins are involved in pathogen defense. The pathway induces rapid growth inhibition, cell wall depositions and accumulation of defense-related transcripts. This protein is required for responses to chitin and acts redundantly with MEKK1a. The polypeptide is Mitogen-activated protein kinase kinase kinase 1b (MEKK1b) (Physcomitrium patens (Spreading-leaved earth moss)).